The chain runs to 288 residues: MITKTTRWPSPAKLNLFLYINGQQENGYHELQTLFQFIDLCDHLTITANQSGQITLAPDIPGVKTEDNLIWKAATLLQQHSQCEFGAHIEIEKILPMGGGIGGGSSNAATVLVALNFLWQLNLSNDTLAALGVKLGADVPIFVHGFAAFAEGIGEKLQPATPKELWYVLIKPEVSIATVDVFTHPNLVRNTPKQPLNALLEATYVNDCEKIVRSVYPEVDYQLSWLLEYAPSRLTGTGACVFAEFNSEKEAQDVYSLIPDNATGFIARGMNTSPLNRTLEEYKSLCKI.

The active site involves Lys-13. Position 96–106 (96–106) interacts with ATP; it reads PMGGGIGGGSS. The active site involves Asp-138.

It belongs to the GHMP kinase family. IspE subfamily.

It catalyses the reaction 4-CDP-2-C-methyl-D-erythritol + ATP = 4-CDP-2-C-methyl-D-erythritol 2-phosphate + ADP + H(+). The protein operates within isoprenoid biosynthesis; isopentenyl diphosphate biosynthesis via DXP pathway; isopentenyl diphosphate from 1-deoxy-D-xylulose 5-phosphate: step 3/6. Catalyzes the phosphorylation of the position 2 hydroxy group of 4-diphosphocytidyl-2C-methyl-D-erythritol. This is 4-diphosphocytidyl-2-C-methyl-D-erythritol kinase from Aliivibrio fischeri (strain ATCC 700601 / ES114) (Vibrio fischeri).